The primary structure comprises 469 residues: Cytosolic beta-glucosidase (469 aa).

The substrate site is built by glutamine 17, histidine 120, and asparagine 164. Glutamate 165 functions as the Proton donor in the catalytic mechanism. Substrate is bound at residue tyrosine 309. The active-site Nucleophile is glutamate 373. Substrate-binding positions include tryptophan 417 and 424 to 425; that span reads EW.

Belongs to the glycosyl hydrolase 1 family. Klotho subfamily. In terms of assembly, may interact with NEU2. The N-terminus is blocked. As to expression, present in small intestine (at protein level). Expressed in liver, small intestine, colon, spleen and kidney. Down-regulated in renal cell carcinomas and hepatocellular carcinomas.

It localises to the cytoplasm. The protein localises to the cytosol. The enzyme catalyses Hydrolysis of terminal, non-reducing beta-D-glucosyl residues with release of beta-D-glucose.. The catalysed reaction is a beta-D-glucosyl-(1&lt;-&gt;1')-N-acylsphing-4-enine + H2O = an N-acylsphing-4-enine + D-glucose. It catalyses the reaction a beta-D-galactosyl-(1&lt;-&gt;1')-N-acylsphing-4-enine + H2O = an N-acylsphing-4-enine + D-galactose. It carries out the reaction beta-D-glucosyl-(1&lt;-&gt;1)-sphing-4-enine + H2O = sphing-4-enine + D-glucose. The enzyme catalyses beta-D-glucosyl-(1&lt;-&gt;1)-N-octadecanoylsphing-4-enine + H2O = N-octadecanoylsphing-4-enine + D-glucose. The catalysed reaction is beta-D-galactosyl-(1&lt;-&gt;1)-sphing-4-enine + H2O = sphing-4-enine + D-galactose. It catalyses the reaction beta-D-galactosyl-(1&lt;-&gt;1')-N-octadecanoylsphing-4-enine + H2O = N-octadecanoylsphing-4-enine + D-galactose. It carries out the reaction a beta-D-xylosyl-(1&lt;-&gt;1')-N-acylsphing-4-enine + cholesterol = cholesteryl 3-beta-D-xyloside + an N-acylsphing-4-enine. Its activity is regulated as follows. Inhibited by 2,4-dinitrophenyl-2-fluoro-2-deoxy-beta-D-glucopyranoside. Inhibited by sodium taurocholate. Inhibited by alpha-1-C-nonyl-DIX/AnDIX. The glucosylceramidase activity is slightly inhibited by conduritol B epoxide/CBE while the galactosylceramidase activity is not. In terms of biological role, neutral cytosolic beta-glycosidase with a broad substrate specificity that could play a role in the catabolism of glycosylceramides. Has a significant glucosylceramidase activity in vitro. However, that activity is relatively low and its significance in vivo is not clear. Hydrolyzes galactosylceramides/GalCers, glucosylsphingosines/GlcSphs and galactosylsphingosines/GalSphs. However, the in vivo relevance of these activities is unclear. It can also hydrolyze a broad variety of dietary glycosides including phytoestrogens, flavonols, flavones, flavanones and cyanogens in vitro and could therefore play a role in the metabolism of xenobiotics. Possesses transxylosylase activity in vitro using xylosylated ceramides/XylCers (such as beta-D-xylosyl-(1&lt;-&gt;1')-N-acylsphing-4-enine) as xylosyl donors and cholesterol as acceptor. Could also play a role in the catabolism of cytosolic sialyl free N-glycans. The chain is Cytosolic beta-glucosidase from Homo sapiens (Human).